A 101-amino-acid chain; its full sequence is Small ribosomal subunit protein uS14 (101 aa).

The segment covering 1-10 (MAKKSSVEKN) has biased composition (basic and acidic residues). The tract at residues 1–23 (MAKKSSVEKNNRRKRMAKNAAPK) is disordered. A compositionally biased stretch (basic residues) spans 11-23 (NRRKRMAKNAAPK).

It belongs to the universal ribosomal protein uS14 family. Part of the 30S ribosomal subunit. Contacts proteins S3 and S10.

Functionally, binds 16S rRNA, required for the assembly of 30S particles and may also be responsible for determining the conformation of the 16S rRNA at the A site. The protein is Small ribosomal subunit protein uS14 of Bradyrhizobium sp. (strain BTAi1 / ATCC BAA-1182).